Here is a 154-residue protein sequence, read N- to C-terminus: Myoglobin (154 aa).

Residues 2 to 148 (GLSDGEWQLV…FRNEMAAQYK (147 aa)) form the Globin domain. S4 is subject to Phosphoserine. Nitrite is bound at residue H65. Residue H65 participates in O2 binding. Phosphothreonine is present on T68. H94 provides a ligand contact to heme b.

As to quaternary structure, monomeric.

Its subcellular location is the cytoplasm. It localises to the sarcoplasm. The enzyme catalyses Fe(III)-heme b-[protein] + nitric oxide + H2O = Fe(II)-heme b-[protein] + nitrite + 2 H(+). It carries out the reaction H2O2 + AH2 = A + 2 H2O. In terms of biological role, monomeric heme protein which primary function is to store oxygen and facilitate its diffusion within muscle tissues. Reversibly binds oxygen through a pentacoordinated heme iron and enables its timely and efficient release as needed during periods of heightened demand. Depending on the oxidative conditions of tissues and cells, and in addition to its ability to bind oxygen, it also has a nitrite reductase activity whereby it regulates the production of bioactive nitric oxide. Under stress conditions, like hypoxia and anoxia, it also protects cells against reactive oxygen species thanks to its pseudoperoxidase activity. This is Myoglobin from Bubalus bubalis (Domestic water buffalo).